We begin with the raw amino-acid sequence, 262 residues long: Putative carbamate hydrolase RutD (262 aa).

Belongs to the AB hydrolase superfamily. Hydrolase RutD family.

It carries out the reaction carbamate + 2 H(+) = NH4(+) + CO2. Functionally, involved in pyrimidine catabolism. May facilitate the hydrolysis of carbamate, a reaction that can also occur spontaneously. The chain is Putative carbamate hydrolase RutD from Rhizobium rhizogenes (strain K84 / ATCC BAA-868) (Agrobacterium radiobacter).